The chain runs to 632 residues: Tail spike protein (632 aa).

One can recognise a Peptidase S74 domain in the interval 505-630 (SDARCKTEPL…KRMQEALAAL (126 aa)).

In terms of assembly, homotrimer. Proteolytic cleavage and release of the chaperone in the host cytosol stabilizes the folded protein. The cleavage gives rise to the mature tail spike protein but is not essential for catalytic activity.

It localises to the virion. Its function is as follows. Functions as a receptor binding protein (RBP) and probably mediates the attachment to the host capsular exopolysaccharides. Displays a depolymerase activity that specifically degrades the K5-type polysaccharides of Escherichia coli capsule. In terms of biological role, the C-terminal chaperone protein mediates homotrimerization and proper folding of the catalytic trimer. The chain is Tail spike protein (kflA) from Escherichia virus K5 (Bacteriophage K5).